The sequence spans 472 residues: ATP synthase subunit beta (472 aa).

157-164 is an ATP binding site; the sequence is GGAGVGKT.

The protein belongs to the ATPase alpha/beta chains family. F-type ATPases have 2 components, CF(1) - the catalytic core - and CF(0) - the membrane proton channel. CF(1) has five subunits: alpha(3), beta(3), gamma(1), delta(1), epsilon(1). CF(0) has three main subunits: a(1), b(2) and c(9-12). The alpha and beta chains form an alternating ring which encloses part of the gamma chain. CF(1) is attached to CF(0) by a central stalk formed by the gamma and epsilon chains, while a peripheral stalk is formed by the delta and b chains.

The protein resides in the cell inner membrane. It carries out the reaction ATP + H2O + 4 H(+)(in) = ADP + phosphate + 5 H(+)(out). Functionally, produces ATP from ADP in the presence of a proton gradient across the membrane. The catalytic sites are hosted primarily by the beta subunits. This chain is ATP synthase subunit beta, found in Desulfatibacillum aliphaticivorans.